Consider the following 209-residue polypeptide: Ribosomal RNA large subunit methyltransferase E (209 aa).

5 residues coordinate S-adenosyl-L-methionine: G63, W65, D83, D99, and D124. K164 functions as the Proton acceptor in the catalytic mechanism.

The protein belongs to the class I-like SAM-binding methyltransferase superfamily. RNA methyltransferase RlmE family.

It is found in the cytoplasm. The catalysed reaction is uridine(2552) in 23S rRNA + S-adenosyl-L-methionine = 2'-O-methyluridine(2552) in 23S rRNA + S-adenosyl-L-homocysteine + H(+). Functionally, specifically methylates the uridine in position 2552 of 23S rRNA at the 2'-O position of the ribose in the fully assembled 50S ribosomal subunit. This Vibrio cholerae serotype O1 (strain ATCC 39541 / Classical Ogawa 395 / O395) protein is Ribosomal RNA large subunit methyltransferase E.